A 147-amino-acid chain; its full sequence is Secreted hemophore CSA2 (147 aa).

An N-terminal signal peptide occupies residues 1 to 20 (MKFSTILAIPFAIAFANAAA). Residues 34 to 145 (NPYTIYPPVP…SALDAAATAT (112 aa)) enclose the CFEM domain. Intrachain disulfides connect C62–C102, C66–C97, C76–C83, and C85–C118. Residue D80 participates in heme binding.

The protein belongs to the RBT5 family. As to quaternary structure, homodimer. The possibility of a transient honotrimer assembly of the holo protein is not ruled out.

Its subcellular location is the secreted. Its function is as follows. Secreted heme-binding protein involved in the utilization of iron from human hemoglobin during hyphal growth. May also play a role in non-hemoglobin iron utilization. Heme transfer occurs between PGA7, RBT5 and CSA2 supporting a model in which the 3 CFEM proteins cooperate in a heme-acquisition system and form a cross-cell wall heme-transfer cascade. The ability to acquire iron from host tissues is a major virulence factor of pathogenic microorganisms. This is Secreted hemophore CSA2 (CSA2) from Candida albicans (strain SC5314 / ATCC MYA-2876) (Yeast).